We begin with the raw amino-acid sequence, 325 residues long: MAASLEKAGLGISVRLLEYTGDGERIVAVASKVSLSRSPAERLLAIGEDEVETWILETFRRQHFSPWEHSVYTFMVEGLSRVASHQLVRHRVASYTQLSHRYSEGYLREAALKACESIGLDCPSKPAETEGGRKAAYRLYSQALERAARDFGASERFAIAAKAFVIPPTILARGDGGDGVVEAYLRSAAIYYSLLSRGARREDARYILPDALRTRIVVTMNARELIQVFFPLRMCTRAQWEIRHIAWLLWRELSRVHPRLFRWAGPSCVLRENTLRTTPASLYSYLEGVERFTQPRCPELVENKAIPGCLRQAASVAPPGDGEYE.

A ThyX domain is found at 12–267; the sequence is ISVRLLEYTG…PRLFRWAGPS (256 aa). Residues Ser-65, 89-91, and Gln-97 each bind FAD; that span reads RHR. DUMP contacts are provided by residues 86–89 and 97–101; these read QLVR and QLSHR. Residues 89–99 carry the ThyX motif motif; sequence RHRVASYTQLS. Residues 110–159 form an insert region; it reads AALKACESIGLDCPSKPAETEGGRKAAYRLYSQALERAARDFGASERFAI. Arg-205 is a dUMP binding site. 221-223 is an FAD binding site; it reads NAR. A dUMP-binding site is contributed by Arg-233. Catalysis depends on Arg-233, which acts as the Involved in ionization of N3 of dUMP, leading to its activation.

It belongs to the thymidylate synthase ThyX family. In terms of assembly, homotetramer. FAD is required as a cofactor.

It carries out the reaction dUMP + (6R)-5,10-methylene-5,6,7,8-tetrahydrofolate + NADPH + H(+) = dTMP + (6S)-5,6,7,8-tetrahydrofolate + NADP(+). The protein operates within pyrimidine metabolism; dTTP biosynthesis. Its function is as follows. Catalyzes the reductive methylation of 2'-deoxyuridine-5'-monophosphate (dUMP) to 2'-deoxythymidine-5'-monophosphate (dTMP) while utilizing 5,10-methylenetetrahydrofolate (mTHF) as the methyl donor, and NADPH and FADH(2) as the reductant. The polypeptide is Flavin-dependent thymidylate synthase (Aeropyrum pernix (strain ATCC 700893 / DSM 11879 / JCM 9820 / NBRC 100138 / K1)).